The following is a 141-amino-acid chain: Large ribosomal subunit protein uL11c (141 aa).

The protein belongs to the universal ribosomal protein uL11 family. In terms of assembly, part of the ribosomal stalk of the 50S ribosomal subunit. Interacts with L10 and the large rRNA to form the base of the stalk. L10 forms an elongated spine to which L12 dimers bind in a sequential fashion forming a multimeric L10(L12)X complex.

It is found in the plastid. The protein localises to the chloroplast. Functionally, forms part of the ribosomal stalk which helps the ribosome interact with GTP-bound translation factors. This Pyropia yezoensis (Susabi-nori) protein is Large ribosomal subunit protein uL11c.